Here is a 57-residue protein sequence, read N- to C-terminus: MPSSKKKKENVPVMSMAGLIRYYEEEHEKYKVDPIYVIIASIVLVAVVVAVTKIIPP.

Residues 1–33 are Cytoplasmic-facing; that stretch reads MPSSKKKKENVPVMSMAGLIRYYEEEHEKYKVD. The chain crosses the membrane as a helical span at residues 34–55; sequence PIYVIIASIVLVAVVVAVTKII. At 56 to 57 the chain is on the extracellular side; it reads PP.

This sequence belongs to the SEC61-beta family. Component of the protein translocase complex. Heterotrimer consisting of alpha (SecY), beta (SecG) and gamma (SecE) subunits. Can form oligomers of the heterotrimer.

The protein resides in the cell membrane. Involved in protein export. The function of the beta subunit is unknown, but it may be involved in stabilization of the trimeric complex. This chain is Preprotein translocase subunit SecG, found in Metallosphaera sedula (strain ATCC 51363 / DSM 5348 / JCM 9185 / NBRC 15509 / TH2).